The primary structure comprises 238 residues: NEDD4-binding protein 2-like 1 (238 aa).

2 disordered regions span residues 1-36 (MEDSFLESFGRLSLQQRQQQPPPRPPPARGPPPRRH) and 183-212 (VLHAEKPSRANRNQGRNSEPSSGSGYWNTY). The span at 20-31 (QPPPRPPPARGP) shows a compositional bias: pro residues. Residues 192–212 (ANRNQGRNSEPSSGSGYWNTY) are compositionally biased toward polar residues.

As to quaternary structure, interacts with dynactin subunit proteins, including DCTN4, DCTN5 and DCTN5.

Might play a role in adipocyte differentiation and triglyceride accumulation. The chain is NEDD4-binding protein 2-like 1 (N4bp2l1) from Mus musculus (Mouse).